A 64-amino-acid chain; its full sequence is SPbeta prophage-derived uncharacterized protein YoqI (64 aa).

This chain is SPbeta prophage-derived uncharacterized protein YoqI (yoqI), found in Bacillus subtilis (strain 168).